Here is a 508-residue protein sequence, read N- to C-terminus: Photosystem II CP47 reaction center protein (508 aa).

Transmembrane regions (helical) follow at residues 21-36, 101-115, 140-156, 203-218, 237-252, and 457-472; these read SVHLMHTALVSGWAGS, IILSGLLFLAAIWHW, GIHLFLSGVLCFSFGAF, IAAGVLGILAGLFHLS, VLSSSIAAVFFAAFVV, and TFALIFFFGHIWHGAR.

Belongs to the PsbB/PsbC family. PsbB subfamily. As to quaternary structure, PSII is composed of 1 copy each of membrane proteins PsbA, PsbB, PsbC, PsbD, PsbE, PsbF, PsbH, PsbI, PsbJ, PsbK, PsbL, PsbM, PsbT, PsbX, PsbY, PsbZ, Psb30/Ycf12, at least 3 peripheral proteins of the oxygen-evolving complex and a large number of cofactors. It forms dimeric complexes. The cofactor is Binds multiple chlorophylls. PSII binds additional chlorophylls, carotenoids and specific lipids..

Its subcellular location is the plastid. The protein localises to the chloroplast thylakoid membrane. One of the components of the core complex of photosystem II (PSII). It binds chlorophyll and helps catalyze the primary light-induced photochemical processes of PSII. PSII is a light-driven water:plastoquinone oxidoreductase, using light energy to abstract electrons from H(2)O, generating O(2) and a proton gradient subsequently used for ATP formation. The chain is Photosystem II CP47 reaction center protein from Adiantum capillus-veneris (Maidenhair fern).